We begin with the raw amino-acid sequence, 209 residues long: Protein GrpE (209 aa).

A compositionally biased stretch (polar residues) spans M1–V13. The segment at M1–N27 is disordered. The span at E15 to N27 shows a compositional bias: acidic residues.

Belongs to the GrpE family. As to quaternary structure, homodimer.

Its subcellular location is the cytoplasm. Its function is as follows. Participates actively in the response to hyperosmotic and heat shock by preventing the aggregation of stress-denatured proteins, in association with DnaK and GrpE. It is the nucleotide exchange factor for DnaK and may function as a thermosensor. Unfolded proteins bind initially to DnaJ; upon interaction with the DnaJ-bound protein, DnaK hydrolyzes its bound ATP, resulting in the formation of a stable complex. GrpE releases ADP from DnaK; ATP binding to DnaK triggers the release of the substrate protein, thus completing the reaction cycle. Several rounds of ATP-dependent interactions between DnaJ, DnaK and GrpE are required for fully efficient folding. The chain is Protein GrpE from Shewanella sediminis (strain HAW-EB3).